Reading from the N-terminus, the 678-residue chain is GAS2-like protein 1 (678 aa).

At A2 the chain carries N-acetylalanine. Residues 27–148 form the Calponin-homology (CH) domain; that stretch reads EAMKEDLADW…CLLEVARRGA (122 aa). Positions 203–275 constitute a GAR domain; it reads NDLRNLDELV…HYLDKHDPCR (73 aa). Positions 276 to 291 are enriched in polar residues; that stretch reads CSSSTHRLPQQRTGTF. Disordered stretches follow at residues 276–524 and 538–678; these read CSSS…FRRL and AASH…DSSM. A phosphoserine mark is found at S306 and S316. Over residues 327–340 the composition is skewed to basic and acidic residues; the sequence is GTKEGPETPLRPRD. At T334 the chain carries Phosphothreonine. 2 positions are modified to phosphoserine: S352 and S355. Residues 354-365 show a composition bias toward low complexity; sequence DSDSSASSAQSG. The span at 370 to 381 shows a compositional bias: basic and acidic residues; sequence RSDDSATGSRRE. A compositionally biased stretch (low complexity) spans 392–403; sequence PASPRRPTAPRS. S394 is subject to Phosphoserine. A compositionally biased stretch (basic and acidic residues) spans 404-413; that stretch reads QSRDRLDRGR. 2 positions are modified to phosphoserine: S436 and S438. Over residues 437-454 the composition is skewed to basic and acidic residues; that stretch reads QSREEQAVLMVRRDRDGQ. Residues 461–471 are compositionally biased toward gly residues; sequence GRGGGGSGGSG. Phosphoserine is present on residues S482 and S489. Over residues 485-495 the composition is skewed to pro residues; the sequence is APRPSRGPSPG. R490 carries the omega-N-methylarginine modification. S493 carries the phosphoserine modification. T501 is subject to Phosphothreonine. An Omega-N-methylarginine modification is found at R507. 2 stretches are compositionally biased toward low complexity: residues 509–519 and 554–568; these read PLQLDPQQEQQ and DSAYCSSSSSSSSLS. Residue R630 is modified to Omega-N-methylarginine. The span at 631–641 shows a compositional bias: basic and acidic residues; it reads GRMDTQPDRKP. Residue S654 is modified to Phosphoserine. Over residues 666–678 the composition is skewed to polar residues; sequence HSVTPRTEPDSSM.

Belongs to the GAS2 family. Interacts with MAPRE1.

It is found in the cytoplasm. The protein resides in the cytoskeleton. Its subcellular location is the stress fiber. Functionally, seems to be involved in the cross-linking of microtubules and microfilaments. Regulates microtubule dynamics and stability by interacting with microtubule plus-end tracking proteins, such as MAPRE1, to regulate microtubule growth along actin stress fibers. This is GAS2-like protein 1 (Gas2l1) from Mus musculus (Mouse).